A 302-amino-acid polypeptide reads, in one-letter code: TATA-box-binding protein (302 aa).

Disordered stretches follow at residues 1–22 (MEQN…GAMT) and 50–81 (SLLE…QTPQ). A compositionally biased stretch (low complexity) spans 50 to 70 (SLLEEQQRQQQQQQAASQQQG). 2 consecutive repeat copies span residues 128-204 (LQNI…ARVV) and 218-295 (IQNM…YPIL).

It belongs to the TBP family. As to expression, enriched in testis but hardly detectable in the ovary (at protein level).

It is found in the nucleus. Its function is as follows. General transcription factor that functions at the core of the DNA-binding multiprotein factor TFIID. Binding of TFIID to the TATA box is the initial transcriptional step of the pre-initiation complex (PIC), playing a role in the activation of eukaryotic genes transcribed by RNA polymerase II. Members of the TBP family are differentially required for transcription and development during early embryogenesis. Regulates mRNA levels in the early embryo by both transcriptional and post-transcriptional mechanisms. Required for transcription of a subset of genes at the mid-blastula transition (MBT). Negatively regulates the expression of other embryonic genes, including autoregulation of the tbp promoter itself. Also functions within a transcription-dependent mechanism to direct the temporally-regulated degradation of a subset of maternal mRNAs after the MBT. This is part of a general mechanism to regulate the maternal to zygotic transition and is required for normal embryonic development. Binds to promoters of a subset of genes. Required for gastrulation. The protein is TATA-box-binding protein of Danio rerio (Zebrafish).